We begin with the raw amino-acid sequence, 336 residues long: GTP 3',8-cyclase (336 aa).

The region spanning 16–241 (AYRRTYYYLR…QSKGITDGPA (226 aa)) is the Radical SAM core domain. GTP is bound at residue Arg25. Residues Cys32 and Cys36 each contribute to the [4Fe-4S] cluster site. Tyr38 serves as a coordination point for S-adenosyl-L-methionine. Cys39 is a binding site for [4Fe-4S] cluster. Arg75 contacts GTP. Gly79 is a binding site for S-adenosyl-L-methionine. Thr106 contacts GTP. S-adenosyl-L-methionine is bound at residue Ser130. Lys167 serves as a coordination point for GTP. Met201 contacts S-adenosyl-L-methionine. Cys264 and Cys267 together coordinate [4Fe-4S] cluster. 269-271 (RLR) is a GTP binding site. Residue Cys281 coordinates [4Fe-4S] cluster.

Belongs to the radical SAM superfamily. MoaA family. As to quaternary structure, monomer and homodimer. The cofactor is [4Fe-4S] cluster.

It catalyses the reaction GTP + AH2 + S-adenosyl-L-methionine = (8S)-3',8-cyclo-7,8-dihydroguanosine 5'-triphosphate + 5'-deoxyadenosine + L-methionine + A + H(+). It functions in the pathway cofactor biosynthesis; molybdopterin biosynthesis. In terms of biological role, catalyzes the cyclization of GTP to (8S)-3',8-cyclo-7,8-dihydroguanosine 5'-triphosphate. This is GTP 3',8-cyclase from Actinobacillus succinogenes (strain ATCC 55618 / DSM 22257 / CCUG 43843 / 130Z).